Consider the following 102-residue polypeptide: uncharacterized protein (102 aa).

Positions 48-102 (LNDKRKSLGIELSMLELQTGVSISTLNRLFQDPSQVRFTTVFLVAQTLGVSLCAI) constitute an HTH cro/C1-type domain. The H-T-H motif DNA-binding region spans 59–78 (LSMLELQTGVSISTLNRLFQ).

This is an uncharacterized protein from Haemophilus influenzae (strain ATCC 51907 / DSM 11121 / KW20 / Rd).